The sequence spans 170 residues: Protein SprT (170 aa).

One can recognise a SprT-like domain in the interval 23-165 (QLANQHLGTD…RECGEKLQFV (143 aa)). Position 78 (histidine 78) interacts with Zn(2+). Residue glutamate 79 is part of the active site. A Zn(2+)-binding site is contributed by histidine 82.

The protein belongs to the SprT family. Zn(2+) serves as cofactor.

It is found in the cytoplasm. The chain is Protein SprT from Yersinia enterocolitica serotype O:8 / biotype 1B (strain NCTC 13174 / 8081).